The following is a 303-amino-acid chain: Nod factor export ATP-binding protein I (303 aa).

Residues Leu5 to Tyr235 form the ABC transporter domain. Gly37–Thr44 serves as a coordination point for ATP.

It belongs to the ABC transporter superfamily. Lipooligosaccharide exporter (TC 3.A.1.102) family. In terms of assembly, the complex is composed of two ATP-binding proteins (NodI) and two transmembrane proteins (NodJ).

The protein localises to the cell inner membrane. Its function is as follows. Part of the ABC transporter complex NodIJ involved in the export of the nodulation factors (Nod factors), the bacterial signal molecules that induce symbiosis and subsequent nodulation induction. Nod factors are LCO (lipo-chitin oligosaccharide), a modified beta-1,4-linked N-acetylglucosamine oligosaccharide. This subunit is responsible for energy coupling to the transport system. This Cupriavidus metallidurans (strain ATCC 43123 / DSM 2839 / NBRC 102507 / CH34) (Ralstonia metallidurans) protein is Nod factor export ATP-binding protein I.